We begin with the raw amino-acid sequence, 249 residues long: 6-phosphogluconolactonase 3 (249 aa).

Belongs to the glucosamine/galactosamine-6-phosphate isomerase family. 6-phosphogluconolactonase subfamily.

It is found in the cytoplasm. Its subcellular location is the nucleus. The enzyme catalyses 6-phospho-D-glucono-1,5-lactone + H2O = 6-phospho-D-gluconate + H(+). Its pathway is carbohydrate degradation; pentose phosphate pathway; D-ribulose 5-phosphate from D-glucose 6-phosphate (oxidative stage): step 2/3. Functionally, hydrolysis of 6-phosphogluconolactone to 6-phosphogluconate. In Saccharomyces cerevisiae (strain RM11-1a) (Baker's yeast), this protein is 6-phosphogluconolactonase 3 (SOL3).